The sequence spans 445 residues: Mitochondrial-processing peptidase subunit alpha-2 (445 aa).

The transit peptide at 1–13 directs the protein to the mitochondrion; sequence MIGRFIARNYTTS.

This sequence belongs to the peptidase M16 family. Heterodimer of alpha and beta subunits, forming the mitochondrial processing protease (MPP) in which subunit alpha is involved in substrate recognition and binding and subunit beta is the catalytic subunit.

It localises to the mitochondrion matrix. Its function is as follows. Substrate recognition and binding subunit of the essential mitochondrial processing protease (MPP), which cleaves the mitochondrial sequence off newly imported precursors proteins. The polypeptide is Mitochondrial-processing peptidase subunit alpha-2 (mppA2) (Dictyostelium discoideum (Social amoeba)).